The chain runs to 381 residues: Carbamoyl phosphate synthase small chain (381 aa).

Residues 1 to 192 (MSKPAILALE…SGYADVSQGD (192 aa)) are CPSase. Residues S47, G244, and G246 each coordinate L-glutamine. Residues 196-381 (HVVAYDYGMK…RFVEMMRHRR (186 aa)) form the Glutamine amidotransferase type-1 domain. Residue C272 is the Nucleophile of the active site. The L-glutamine site is built by L273, Q276, N314, G316, and F317. Residues H356 and E358 contribute to the active site.

This sequence belongs to the CarA family. As to quaternary structure, composed of two chains; the small (or glutamine) chain promotes the hydrolysis of glutamine to ammonia, which is used by the large (or ammonia) chain to synthesize carbamoyl phosphate. Tetramer of heterodimers (alpha,beta)4.

The enzyme catalyses hydrogencarbonate + L-glutamine + 2 ATP + H2O = carbamoyl phosphate + L-glutamate + 2 ADP + phosphate + 2 H(+). The catalysed reaction is L-glutamine + H2O = L-glutamate + NH4(+). It functions in the pathway amino-acid biosynthesis; L-arginine biosynthesis; carbamoyl phosphate from bicarbonate: step 1/1. It participates in pyrimidine metabolism; UMP biosynthesis via de novo pathway; (S)-dihydroorotate from bicarbonate: step 1/3. Its function is as follows. Small subunit of the glutamine-dependent carbamoyl phosphate synthetase (CPSase). CPSase catalyzes the formation of carbamoyl phosphate from the ammonia moiety of glutamine, carbonate, and phosphate donated by ATP, constituting the first step of 2 biosynthetic pathways, one leading to arginine and/or urea and the other to pyrimidine nucleotides. The small subunit (glutamine amidotransferase) binds and cleaves glutamine to supply the large subunit with the substrate ammonia. The polypeptide is Carbamoyl phosphate synthase small chain (Halomonas eurihalina).